The primary structure comprises 602 residues: Major facilitator superfamily multidrug transporter mfsB (602 aa).

Helical transmembrane passes span 29-49 (FVLA…FPYV), 67-87 (LYAG…GMFW), 98-118 (PVLI…GFAP), 128-148 (ALGG…AEIV), 160-180 (IMPF…GALA), 201-221 (FLLP…VGFL), 329-349 (IVAY…IPVF), 378-398 (FMLA…FPFV), 411-431 (VLLV…LPSI), 439-459 (LALI…AILL), 468-486 (VLGS…SRAL), and 505-525 (IIAW…SFWM). A disordered region spans residues 527–602 (ESEPRRDSEK…RSNPLAFAED (76 aa)). Over residues 528-538 (SEPRRDSEKAG) the composition is skewed to basic and acidic residues.

This sequence belongs to the major facilitator superfamily.

The protein localises to the membrane. Functionally, major facilitator superfamily transporter that may be involved in A.fumigatus adaptation to azoles such as vorizonazole. The chain is Major facilitator superfamily multidrug transporter mfsB from Aspergillus fumigatus (strain ATCC MYA-4609 / CBS 101355 / FGSC A1100 / Af293) (Neosartorya fumigata).